Here is a 722-residue protein sequence, read N- to C-terminus: Polyribonucleotide nucleotidyltransferase (722 aa).

Positions 495 and 501 each coordinate Mg(2+). Residues 561 to 620 (PRLYVMKINPEKIREVIGKGGETIRSITKDTGCEINIEEDGTITIASVSSEGAEAAKKRI) enclose the KH domain. In terms of domain architecture, S1 motif spans 630 to 700 (GKVYEGTVVK…DRGRIRLSIK (71 aa)).

Belongs to the polyribonucleotide nucleotidyltransferase family. Requires Mg(2+) as cofactor.

It is found in the cytoplasm. It carries out the reaction RNA(n+1) + phosphate = RNA(n) + a ribonucleoside 5'-diphosphate. Its function is as follows. Involved in mRNA degradation. Catalyzes the phosphorolysis of single-stranded polyribonucleotides processively in the 3'- to 5'-direction. This is Polyribonucleotide nucleotidyltransferase from Chromobacterium violaceum (strain ATCC 12472 / DSM 30191 / JCM 1249 / CCUG 213 / NBRC 12614 / NCIMB 9131 / NCTC 9757 / MK).